Reading from the N-terminus, the 123-residue chain is Large ribosomal subunit protein uL14 (123 aa).

The protein belongs to the universal ribosomal protein uL14 family. Part of the 50S ribosomal subunit. Forms a cluster with proteins L3 and L19. In the 70S ribosome, L14 and L19 interact and together make contacts with the 16S rRNA in bridges B5 and B8.

Binds to 23S rRNA. Forms part of two intersubunit bridges in the 70S ribosome. The polypeptide is Large ribosomal subunit protein uL14 (Citrobacter koseri (strain ATCC BAA-895 / CDC 4225-83 / SGSC4696)).